Here is a 586-residue protein sequence, read N- to C-terminus: MHPLQRVFRAQRLSAPLTSMCWVLLRTFRAHNSTSCPDPEGKSSEGVQKDFSSRLATGPTFQHFLRSASVPQEKPSSPEVEDPPPYLSGDELLGRQRKVYLETYGCQMNVNDTEIAWSILQKSGYLRTSNLQEADVILLVTCSIREKAEQTIWNRLHQLKVLKAKRPRSRVPLRIGILGCMAERLKGEILNREKMVDLLAGPDAYRDLPRLLAVVESGQQAANVLLSLDETYADIMPVQTSPSATSAFVSIMRGCDNMCSYCIVPFTRGRERSRPVASILDEVRKLSEQGLKEVTLLGQNVNSFRDNSEVQFSSTGSANLSRGFTTNYKPKQGGLRFSHLLDQVSRIDPEMRIRFTSPHPKDFPDEVLQLIRERHNICKQIHLPAQSGSSRVLEAMRRGYSREAYVALVHHIREAIPGVGLSSDFITGFCGETEDDHLQTVSLLREVQYNTGFLFAYSMRQKTRAYHRLKDDVPEEVKLRRLEELITVFREEASKVNATSVGCTQLVLVEGFSKRSTTDLCGRNDANLKVIFPDAEVEDITDPGLKVRAQPGDYVLVKIISASSQTLKGHILCRTTMKDSSMNCLT.

The transit peptide at 1 to 30 (MHPLQRVFRAQRLSAPLTSMCWVLLRTFRA) directs the protein to the mitochondrion. The interval 68–90 (ASVPQEKPSSPEVEDPPPYLSGD) is disordered. The MTTase N-terminal domain occupies 97-217 (RKVYLETYGC…LPRLLAVVES (121 aa)). Positions 106, 142, 180, 255, 259, and 262 each coordinate [4Fe-4S] cluster. One can recognise a Radical SAM core domain in the interval 241–495 (SPSATSAFVS…ITVFREEASK (255 aa)). Residues 498–573 (ATSVGCTQLV…SQTLKGHILC (76 aa)) enclose the TRAM domain.

This sequence belongs to the methylthiotransferase family. MiaB subfamily. Interacts with CDK5R1 (p35 form). CDK5RAP1, CDK5RAP2 and CDK5RAP3 show competitive binding to CDK5R1. Forms a complex with CDK5R1 and CDK5. The cofactor is [4Fe-4S] cluster. Expressed in brain.

The protein resides in the mitochondrion inner membrane. The catalysed reaction is N(6)-dimethylallyladenosine(37) in tRNA + (sulfur carrier)-SH + AH2 + 2 S-adenosyl-L-methionine = 2-methylsulfanyl-N(6)-dimethylallyladenosine(37) in tRNA + (sulfur carrier)-H + 5'-deoxyadenosine + L-methionine + A + S-adenosyl-L-homocysteine + 2 H(+). Functionally, methylthiotransferase that catalyzes the conversion of N6-(dimethylallyl)adenosine (i(6)A) to 2-methylthio-N6-(dimethylallyl)adenosine (ms(2)i(6)A) at position 37 (adjacent to the 3'-end of the anticodon) of four mitochondrial DNA-encoded tRNAs (Ser(UCN), Phe, Tyr and Trp). Essential for efficient and highly accurate protein translation by the ribosome. Specifically inhibits CDK5 activation by CDK5R1. Essential for efficient mitochondrial protein synthesis and respiratory chain. The polypeptide is Mitochondrial tRNA methylthiotransferase CDK5RAP1 (Cdk5rap1) (Rattus norvegicus (Rat)).